The following is a 349-amino-acid chain: Deoxyguanosinetriphosphate triphosphohydrolase-like protein (349 aa).

The HD domain maps to 80–197 (RLTHTLEVAQ…VKYSDKIAYV (118 aa)).

Belongs to the dGTPase family. Type 2 subfamily.

The protein is Deoxyguanosinetriphosphate triphosphohydrolase-like protein of Clostridium tetani (strain Massachusetts / E88).